The following is a 4043-amino-acid chain: MGSQNLEPIAIVGSACRFPGGVNSPSALWKLLEDPKDVCTDIPSDRFDTTGFYHPDGKHHGATNVRKSYLLQEDLRLFDTAFFNISPNEADSMDPQQRILLETVYEALEAGGHTMESLRGSDTAVFTGTMGVDYNDTGIRDLNTVPTYFATGVNRAIISNRVSYFFDWHGPSMTIDTACSSSLIAVHQAVKALRTDESRVALACGTQVILNPEMYVIESKLKMLSPTGRSRMWDADADGYARGEGMAAIVLKRLSDAIADGDHIECLIRHTGSNQDGYSNGITVPSTEAQAALIRQTYAQAGLDPERCAEDSPQFFEAHGTGTKAGDPKEAAAIYHSFGRHKSAGDTPLYVGSIKTVIGHLEGSAGLAGLLKASGSIQNGVIAPNLLFQRLNPDIEPFYKGLQVPTKVIPWPQLPAGVPRRASVNSFGFGGSNAHAILEEYRGPSGQSEGTSGSQDGAIFTPFVFSAFSESSLVAQLRATADYLRTQQEKVNAKDLAWTLQSRRSQFPTKLALSALNIEELVSKIDAKLAPLAQNPNIAIGTKASSKAASAGPKILGVFTGQGAQWASMGAELIRSSAFVAKRIDELEQSLAALPASDRPQWSLKAEIMANSDTSRIGEAALSQPLCTAIQVVLVDLLQSAGISFSAVVGHSSGEIAAAYAAGFFSANDAVRIAYYRGLHARLAGNASTGQSGAMIAVGTSWEDAQDLISLRAFKGRLAVAAHNSAASVTLSGDADAVAHAKRVFDDEKKFARVLKVDTAYHSHHMLPCGDPYISSLQSCVIQINKTRKDNSCAWFSSVTPSSQGMEPIDALKDTYWRDNMTNAVLFADAVKNAVASDEQLSLVLEVGPHPALKGPATQNIADVRPSPIPYSGVLSRGANDVNAFSDALGFVWTHFGSQHVDFQSYTKLVSDGERQPKLVVGLPSYQWNHARLHWNESRRSKRLRGRKQATHEILGTILPESTPQDLRWSNILKVSEMPWMEGHQLQGQTVFPAAGYIAMALEASKFLAADKEVKVFEVNDLAIPRAVTFEEGDTSGVETLVTLTDIRQHQNKYLAANFSCYSLPVLSSGSEQEMDLIATATVKIILGTPSVESLMAPPAEDYNLFPIDADRFYTTLEGLGYGYSGPFKAFSSMQRRLDYATGQVATYVYSEDDTSPYLFHPSTLDVAFHAAMLAYSSPGDERLWSLHVPTGIRSVRVNPALCSLLPATGTRLPVRASIDGTSTSFSGYVDLLSEDGEYSAVQIEDLSIKTFAPATQADDRVLFTHTKLDIAGPDGAAVAEGVRPTALEKELAHACERMAYFYVRKWNSELSDDEWANGQPHYKYLHDWVKRTLDLAKKGQHPTLQRKWANDTAEEINALMDQYPDNLDVKMIRTVGEKIPPAVRNETTILEHLLQDNMLDDFYKLGSGFQRYNQFLASMMKQITHRYPHTKILEIGAGTGGATKYLLKAMGDKMASYTYTDISLGFFGKAAEIFKEYSDKMTFKVLDVEKSPAAQGYEQHSYDIVIASNVLHATESLHTTLVNTRKLLKPGGYLLLLEITNNNPIRTGLIWGTFAGWWLGVEDGRRWAPTISPGQWHSALRKAGFAGVDAVTPEIDTVAWPFSIMASQAVDDRVTFLRQPLSSLSPPIHIESLVILGNQSLQTARLAEELADNLRRFCGELTILDSLPTDEESLDLAPQSTFINLVDIDSPIFKDITSEGMGGLQRMFELAKHVLWITSGALIEEPYHMSSITFSRVVRRESGHINLAHLDVSDLQQSDVPKAISKHLLQLVALDEWETPAIGADGQEDQQRILWSKESEAFLENGTLLLPRLVNNVEQNARLNSARRTIYKEVPIRSPTVTLIPPSATSPPSLAEPTSLVPRRSDNLLWVDSSSLMALNVASDSYLFLAVSKEDATGRPLLLLSTTNSVAMAPVATLEAPMDAKTYVKNPSESSSRLLVTAASEILASSLIDRLSPGSSVLVHCSNKDRFLAAALSRRASPAAVMFTFTFDADDKSGTENSAWVPLSGRASNYGIRKAMPSAKPTHFLDLTAGTGLGLRISQLLPPTCHHIEISSLVRNESTVASSCDPDTLTNHLRETCLGDELTSALASEQRELKDLIIAADHLDTSATYHATSAVFWPSTGLVKVGVSSIDSTGLFSRDKTYLLVGLTGKIGQSIAKWLVANGAGCVCLMSRNPNIEPAWIESFQGTGGDVKIYSMDSTDITSVETVMNEIRTTCPPIGGVAHGSMVLHDSLFSKMTVEDMQTVLAPKIDGAIYLDQLFYDDDLDFFVLFSSAACVVGNLGQANYAAANGYLNSLSRQRRRRGVAGSTFDIGQVAGVGYIESAGQIVMDQLSALGLQRLSEADLQQVFAETIRAGRPDPKDAETTPFAVVTSGIRNFSEDENIKGPWFTNPFFSHCVIDAKVAELESDSSDKKSNIPAARQLVKATSLEQALDILKECFATKLRVILQLGSQDIDYDAPLVELGIDSLVAVEVRSWFLKEVRVDIPVLKVVGGASLAELCDRVVDKLPEELLVSVGKQGESQPPASTAQPQPVAPKPKPLPVPSFVVDSNGPPSEVSVSPAGTPLLSAGPASYSATEASTRSGSPSEATRLSQKVSSKLQSYFPPPPEPAVERKRPAKRFIKSVPISLGQSRFWFLQQLLDDQRTHNVAYYYHIKGNLDVGDMERAVRLVASRHEALRTCFVQDETDASQAYQKVLPSSPVRLICKKIDSEDDVASEYQRLRAHDLDMASGELLKLVLLTLSPSSHFLLMYHHHIIMDGISLQVFLSDLEKAYKGESLGPAPKQYPDFSKAQRQAFENGEMKKELAFWRRIFPDGEQPPVLPLLPMARTNARVPMAKFDTHQVQARVDAALAAKVRTVAKQQRSTPFHLYLAAFKALLFCFTDVDELTIGVADGARHDSSLMGSIGFFLNLLTLRFRRQPNQPFTEAIAEARKISHAALENSRVPFDVLLSELNVARSSTYSPFFQAFIDYRQGHQEEQTWGNCQMRMSEEVHTGKTAYDITVDVTETDAAAFIFFRGQKSIYDQEATQLLCDTYVHFLEVLTKEPSLAMSAIPRFSEKQLAEAIQVGRGPKLVSDWPETLPLRIDQVARENPDKVALMDGTGKALTYASMINRIHSIAEALQEAGVGPGLRVLVFQQATSDWPCSMLAIMRLGAIYVPLDLRNPLPRLAAVAQDCEPTAILADASTLDEASQLGVPSARLIDVSLVKTNPSKEVSNDSRAHSTAAILYTSGSTGTPKGIMVTHEGLRNEIEGYTKTWKLGPERVLQQSAFTFNHSSDQIYTGLVNGGMVYVVPWDKRGNALEITKIIQEQGITYTKATPSEYSLWMLYGRESLRLATSWRCAFGGGESLTTTVTQQFADLDLPQLHFFNSYGPTEISISSTKMEIPYRDREALERVGRIPCGYSLPGYYMYAVDEELRPLPAGMPGQLCIGGTGVSLGYLKNQELTDKHFLPNPFATEEDIANGWTRMYLTGDIGHMNQDGTMVFHSRMAGDTQVKIRGLRIELSDIESNIVAASQGALREAVVTLREGDPEFLVAHVVFVPECTIADKETFLQQLLHNLPVPQYMIPVVAIPIDELPLTNHSKVDRKAVKSLPLPHRVDRPDTSDDTELTETMIQLKGLWRGVLGKAIDQLGFDITPFTSFFLVGGNSLLIIRLQSEIRKRFRAAVPLVELLGANTLGEMAQKVEETISVKTIDWEYDTRPPTISASAIASAIASVPIDRARKGSTIVITGATGFLSKHLLPMLDARTDVDVIHCLAVRDIERAYSSPKVIHHSGDLSSPLLGLSNDEFNELSGTADAILHMGAARSFWDSYHVLRPINVAPTSDLVKLAAPRRVPIHYISTASLFGGTTATLDGSAVSAAAYPPPTDGSSGYAATRWASERILERSAADLGVPSSIYRLCPATTRQDAPQALLDEFTHYGSIIRATPDLSGWSGRLDMLPAVLTAQWLCEALLNYEERSGIVQFRNYESLLTVTGAELTASFDQEQSGSGNLEKISLLKWIGKIKKAGFPYFLASHEIAIEKEGSVNDTKLEMRR.

Residues 6–440 (LEPIAIVGSA…GSNAHAILEE (435 aa)) form the Ketosynthase family 3 (KS3) domain. Active-site for beta-ketoacyl synthase activity residues include Cys-179, His-319, and His-360. A malonyl-CoA:ACP transacylase (MAT) domain region spans residues 558–894 (VFTGQGAQWA…FSDALGFVWT (337 aa)). The tract at residues 952–1090 (HEILGTILPE…ATVKIILGTP (139 aa)) is N-terminal hotdog fold. A dehydratase (DH) domain region spans residues 952–1256 (HEILGTILPE…LSIKTFAPAT (305 aa)). The PKS/mFAS DH domain occupies 952-1258 (HEILGTILPE…IKTFAPATQA (307 aa)). His-984 (proton acceptor; for dehydratase activity) is an active-site residue. The tract at residues 1105–1258 (LFPIDADRFY…IKTFAPATQA (154 aa)) is C-terminal hotdog fold. Asp-1166 (proton donor; for dehydratase activity) is an active-site residue. Residues 1417-1591 (LASMMKQITH…RKAGFAGVDA (175 aa)) form a methyltransferase (MT) domain region. The interval 2146–2320 (TYLLVGLTGK…GSTFDIGQVA (175 aa)) is ketoreductase (KR) domain. The region spanning 2434–2512 (EQALDILKEC…ELCDRVVDKL (79 aa)) is the Carrier 1 domain. Ser-2472 carries the post-translational modification O-(pantetheine 4'-phosphoryl)serine. A disordered region spans residues 2521-2618 (GKQGESQPPA…PPPPEPAVER (98 aa)). Low complexity predominate over residues 2527-2536 (QPPASTAQPQ). Over residues 2537–2547 (PVAPKPKPLPV) the composition is skewed to pro residues. The segment covering 2578–2605 (YSATEASTRSGSPSEATRLSQKVSSKLQ) has biased composition (polar residues). The segment at 2626–3067 (IKSVPISLGQ…IPRFSEKQLA (442 aa)) is condensation (C) domain. The interval 3092–3496 (QVARENPDKV…GTMVFHSRMA (405 aa)) is adenylation (A) domain. In terms of domain architecture, Carrier 2 spans 3614-3695 (TELTETMIQL…EMAQKVEETI (82 aa)). Residue Ser-3655 is modified to O-(pantetheine 4'-phosphoryl)serine. The interval 3736–3954 (ITGATGFLSK…DMLPAVLTAQ (219 aa)) is reductase (R) domain.

The protein in the C-terminal section; belongs to the NRP synthetase family.

It catalyses the reaction malate + 6 malonyl-CoA + acetyl-CoA + 2 AH2 + 2 S-adenosyl-L-methionine + 5 NADPH + 9 H(+) = trihazone A + 2 A + 2 S-adenosyl-L-homocysteine + 6 CO2 + 5 NADP(+) + 7 CoA + 6 H2O. It participates in secondary metabolite biosynthesis. Its function is as follows. Hybrid PKS-NRPS synthetase; part of the gene cluster that produces the tetronate natural products trihazones. The PKS-NRPS synthetase thnA with the help of the trans-enoyl reductase thnE are responsible for the synthesis of the carboxylmethyl containing trihazone A. The PKS portion of thnA synthesizes beta-keto-triene chain from one acetyl-CoA and 6 equivalents of malonyl-CoA, in collaboration with thnE, which selectively reduces the enoyl intermediate during the first and fourth iteration of the PKS. The NRPS domain selects and activates malate, of which the alpha-hydroxyl group attacks the completed polyketide acyl-S-ACP chain to form the ester product. Intramolecular Dieckmann cyclization catalyzed by the terminal reductase domain releases the product as trihazone A from the PKS-NPRS. The pathway begins with the formation of trihazone A by the hybrid PKS-NRPS synthetase thnA and the trans-enoyl reductase thnE. Trihazone A is further decarboxylated by the 2-oxoglutarate-dependent dioxygenase thnC to produce trihazone D. The function of the FAD-dependent monooxygenase thnD has still to be identified. This Trichoderma harzianum (Hypocrea lixii) protein is Hybrid PKS-NRPS synthetase thnA.